A 257-amino-acid chain; its full sequence is 3-methyl-2-oxobutanoate hydroxymethyltransferase (257 aa).

Mg(2+) contacts are provided by Asp42 and Asp81. 3-methyl-2-oxobutanoate-binding positions include 42-43 (DS), Asp81, and Lys110. Residue Glu112 coordinates Mg(2+). Glu176 serves as the catalytic Proton acceptor.

It belongs to the PanB family. Homodecamer; pentamer of dimers. Requires Mg(2+) as cofactor.

It is found in the cytoplasm. It carries out the reaction 3-methyl-2-oxobutanoate + (6R)-5,10-methylene-5,6,7,8-tetrahydrofolate + H2O = 2-dehydropantoate + (6S)-5,6,7,8-tetrahydrofolate. It functions in the pathway cofactor biosynthesis; (R)-pantothenate biosynthesis; (R)-pantoate from 3-methyl-2-oxobutanoate: step 1/2. Its function is as follows. Catalyzes the reversible reaction in which hydroxymethyl group from 5,10-methylenetetrahydrofolate is transferred onto alpha-ketoisovalerate to form ketopantoate. This is 3-methyl-2-oxobutanoate hydroxymethyltransferase from Pelagibacter ubique (strain HTCC1062).